The chain runs to 71 residues: uncharacterized protein (71 aa).

The span at 20–32 (SSGRRQLTATQPR) shows a compositional bias: polar residues. The interval 20–46 (SSGRRQLTATQPRSDPESQRGRTSSNR) is disordered.

This is an uncharacterized protein from Rhizobium leguminosarum.